The following is a 101-amino-acid chain: NAD(P)H-quinone oxidoreductase subunit 4L, chloroplastic (101 aa).

The next 3 membrane-spanning stretches (helical) occupy residues 2 to 22 (MLEH…YGLI), 32 to 52 (MCLE…SDLF), and 61 to 81 (IFSI…LAIV).

It belongs to the complex I subunit 4L family. NDH is composed of at least 16 different subunits, 5 of which are encoded in the nucleus.

The protein localises to the plastid. It localises to the chloroplast thylakoid membrane. It catalyses the reaction a plastoquinone + NADH + (n+1) H(+)(in) = a plastoquinol + NAD(+) + n H(+)(out). The catalysed reaction is a plastoquinone + NADPH + (n+1) H(+)(in) = a plastoquinol + NADP(+) + n H(+)(out). Its function is as follows. NDH shuttles electrons from NAD(P)H:plastoquinone, via FMN and iron-sulfur (Fe-S) centers, to quinones in the photosynthetic chain and possibly in a chloroplast respiratory chain. The immediate electron acceptor for the enzyme in this species is believed to be plastoquinone. Couples the redox reaction to proton translocation, and thus conserves the redox energy in a proton gradient. This is NAD(P)H-quinone oxidoreductase subunit 4L, chloroplastic from Nandina domestica (Heavenly bamboo).